A 345-amino-acid polypeptide reads, in one-letter code: Protein GAMETE CELL DEFECTIVE 1, mitochondrial (345 aa).

The N-terminal 43 residues, 1–43 (MLALRKTLLHGRLPAAPPAAAAAAIASRIPALLRRLSSSPGDG), are a transit peptide targeting the mitochondrion. Residues 36 to 81 (LSSSPGDGQGGDEWGSSWSTGITKEHFDGSDAAVGRPVTSPSKPVS) form a disordered region.

Expressed in roots, stems, leaves and florets.

It is found in the mitochondrion. Functionally, essential for fertility (male and female gametophyte functions and development). Required for the integrity of female gametic mitochondria. Involved in embryo apical-basal patterning, and particularly dorsal-ventral patterning, during early embryogenesis, and endosperm free nucleus positioning and development as well as early endosperm development, probably by modulating the expression pattern of related genes (e.g. AL1, MYB3/AL2, CYP78A13/GE, PNH1, HAZ1, MPK6 and OSH1). Has function in triggering of endosperm programmed cell death (PCD) leading to syncytial endosperm cellularization and starchy endosperm cell maturation. Implicated in central vacuole dynamics necessary for microspore development leading to pollen production, and for pollen development and germination. The polypeptide is Protein GAMETE CELL DEFECTIVE 1, mitochondrial (Oryza sativa subsp. japonica (Rice)).